We begin with the raw amino-acid sequence, 354 residues long: Ornithine carbamoyltransferase, catabolic (354 aa).

Carbamoyl phosphate contacts are provided by residues 67–70 (STRT), Gln94, Arg118, and 145–148 (HPTQ). Residues Asn177, Asp241, and 245 to 246 (SM) each bind L-ornithine. Carbamoyl phosphate is bound by residues 284-285 (CL) and Arg329.

This sequence belongs to the aspartate/ornithine carbamoyltransferase superfamily. OTCase family.

Its subcellular location is the cytoplasm. The enzyme catalyses carbamoyl phosphate + L-ornithine = L-citrulline + phosphate + H(+). It functions in the pathway amino-acid degradation; L-arginine degradation via ADI pathway; carbamoyl phosphate from L-arginine: step 2/2. Its function is as follows. Reversibly catalyzes the transfer of the carbamoyl group from carbamoyl phosphate (CP) to the N(epsilon) atom of ornithine (ORN) to produce L-citrulline. This is Ornithine carbamoyltransferase, catabolic (arcB) from Lactococcus lactis subsp. cremoris (Streptococcus cremoris).